The following is a 412-amino-acid chain: Zinc finger protein 821 (412 aa).

Residues 26-83 are disordered; the sequence is RQAMMKTDFPGDLGSQRQAIQQLRDQDSSSSDSEGDEEETTQDEVSSHTSEEDGGVVK. The span at 58–67 shows a compositional bias: acidic residues; sequence SEGDEEETTQ. 2 C2H2-type zinc fingers span residues 116–140 and 150–172; these read GLCQ…VYQH and YMCP…LLIH. Residues 257–366 are a coiled coil; it reads KWALRRQNEP…EKMDMMLRAQ (110 aa). Positions 278 to 319 are disordered; it reads RTAKKSRRDNETPEEREVRRMRDREAKRLQRMQETDEQRARR.

This sequence belongs to the krueppel C2H2-type zinc-finger protein family.

The protein localises to the nucleus. Functionally, may be involved in transcriptional regulation. This Bos taurus (Bovine) protein is Zinc finger protein 821 (ZNF821).